Here is a 254-residue protein sequence, read N- to C-terminus: Probable membrane transporter protein YjnA (254 aa).

6 helical membrane passes run 5 to 25, 75 to 95, 105 to 125, 143 to 163, 187 to 207, and 209 to 229; these read IILMGLFVGALVGLTGVGGAA, AIGSIPSASLAIGILHLFPAF, HALGYVLTLVAISIIVRLFLD, ALTILIGVVFGFIVGLTSIGS, IAHAFLLVTAAGILNASFGSV, and YMLAANLLLGSIPGVLIGSHL.

Belongs to the 4-toluene sulfonate uptake permease (TSUP) (TC 2.A.102) family.

The protein resides in the cell membrane. The polypeptide is Probable membrane transporter protein YjnA (yjnA) (Bacillus subtilis (strain 168)).